The primary structure comprises 414 residues: NAD-specific glutamate dehydrogenase (414 aa).

Positions 70 and 94 each coordinate substrate. The Proton donor role is filled by K106. NAD(+) is bound by residues T190 and N221. Residue S348 coordinates substrate.

It belongs to the Glu/Leu/Phe/Val dehydrogenases family. As to quaternary structure, homohexamer.

It carries out the reaction L-glutamate + NAD(+) + H2O = 2-oxoglutarate + NH4(+) + NADH + H(+). The protein is NAD-specific glutamate dehydrogenase (gluD) of Staphylococcus aureus (strain COL).